The sequence spans 176 residues: Cystatin-related protein 1 (176 aa).

Residues 1-26 (MCKTLHGTLLLLAIFVLFLNFSHATA) form the signal peptide. Positions 27 to 31 (KRTRR) are excised as a propeptide. Residue asparagine 71 is glycosylated (N-linked (GlcNAc...) asparagine). 2 disulfides stabilise this stretch: cysteine 129–cysteine 139 and cysteine 153–cysteine 173.

It belongs to the cystatin family. In terms of tissue distribution, prostate and lacrimal gland.

This is Cystatin-related protein 1 (Andpro) from Rattus norvegicus (Rat).